A 388-amino-acid polypeptide reads, in one-letter code: Deoxyguanosinetriphosphate triphosphohydrolase-like protein (388 aa).

The tract at residues 1–32 is disordered; that stretch reads MSVGMAAPRAPYSCDPDRSRGRLFAEPPSRTR. Positions 69 to 205 constitute an HD domain; sequence RLTHSLEVAQ…AALADDIAYD (137 aa).

The protein belongs to the dGTPase family. Type 2 subfamily.

The chain is Deoxyguanosinetriphosphate triphosphohydrolase-like protein from Bradyrhizobium sp. (strain ORS 278).